Consider the following 20-residue polypeptide: Fibrinogen beta chain (20 aa).

The residue at position 5 (Tyr-5) is a Sulfotyrosine.

In terms of assembly, heterohexamer; disulfide linked. Contains 2 sets of 3 non-identical chains (alpha, beta and gamma). The 2 heterotrimers are in head to head conformation with the N-termini in a small central domain. Conversion of fibrinogen to fibrin is triggered by thrombin, which cleaves fibrinopeptides A and B from alpha and beta chains, and thus exposes the N-terminal polymerization sites responsible for the formation of the soft clot.

Its subcellular location is the secreted. Cleaved by the protease thrombin to yield monomers which, together with fibrinogen alpha (FGA) and fibrinogen gamma (FGG), polymerize to form an insoluble fibrin matrix. Fibrin has a major function in hemostasis as one of the primary components of blood clots. In addition, functions during the early stages of wound repair to stabilize the lesion and guide cell migration during re-epithelialization. Was originally thought to be essential for platelet aggregation, based on in vitro studies using anticoagulated blood. However subsequent studies have shown that it is not absolutely required for thrombus formation in vivo. Enhances expression of SELP in activated platelets. Maternal fibrinogen is essential for successful pregnancy. Fibrin deposition is also associated with infection, where it protects against IFNG-mediated hemorrhage. May also facilitate the antibacterial immune response via both innate and T-cell mediated pathways. In Capra hircus (Goat), this protein is Fibrinogen beta chain (FGB).